The primary structure comprises 523 residues: Polypyrimidine tract-binding protein 3 (523 aa).

The disordered stretch occupies residues 1–25 (MNSSTSAGVYANGNDNKKFKGDRPP). 3 RRM domains span residues 30-114 (RVLH…NLPN), 153-229 (LRII…FSKL), and 329-403 (SVLL…LSKH). Residue K36 forms a Glycyl lysine isopeptide (Lys-Gly) (interchain with G-Cter in SUMO2) linkage. The residue at position 98 (Y98) is a Phosphotyrosine. A Phosphothreonine modification is found at T109. K187 is covalently cross-linked (Glycyl lysine isopeptide (Lys-Gly) (interchain with G-Cter in SUMO2)). Position 394 is an N6-acetyllysine (K394). The tract at residues 406–426 (VQLPREGQEDQGLTKDFSNSP) is disordered. S425 is subject to Phosphoserine. The RRM 4 domain occupies 446 to 521 (ATLHLSNIPP…HHLRVSFSKS (76 aa)).

In terms of assembly, interacts with THBS4 (via the acidic amphipathic C-terminus).

Functionally, RNA-binding protein that mediates pre-mRNA alternative splicing regulation. Plays a role in the regulation of cell proliferation, differentiation and migration. Positive regulator of EPO-dependent erythropoiesis. Participates in cell differentiation regulation by repressing tissue-specific exons. Promotes Fas exon 6 skipping. Binds RNA, preferentially to both poly(G) and poly(U). This Mus musculus (Mouse) protein is Polypyrimidine tract-binding protein 3 (Ptbp3).